The chain runs to 277 residues: Thymidylate synthase (277 aa).

DUMP is bound at residue arginine 21. Residue histidine 51 participates in (6R)-5,10-methylene-5,6,7,8-tetrahydrofolate binding. 126 to 127 lines the dUMP pocket; it reads RR. The active-site Nucleophile is the cysteine 159. DUMP contacts are provided by residues 179 to 182, asparagine 190, and 220 to 222; these read RSAD and HLY. Aspartate 182 lines the (6R)-5,10-methylene-5,6,7,8-tetrahydrofolate pocket. Position 276 (alanine 276) interacts with (6R)-5,10-methylene-5,6,7,8-tetrahydrofolate.

It belongs to the thymidylate synthase family. Bacterial-type ThyA subfamily. As to quaternary structure, homodimer.

The protein resides in the cytoplasm. The catalysed reaction is dUMP + (6R)-5,10-methylene-5,6,7,8-tetrahydrofolate = 7,8-dihydrofolate + dTMP. It participates in pyrimidine metabolism; dTTP biosynthesis. Its function is as follows. Catalyzes the reductive methylation of 2'-deoxyuridine-5'-monophosphate (dUMP) to 2'-deoxythymidine-5'-monophosphate (dTMP) while utilizing 5,10-methylenetetrahydrofolate (mTHF) as the methyl donor and reductant in the reaction, yielding dihydrofolate (DHF) as a by-product. This enzymatic reaction provides an intracellular de novo source of dTMP, an essential precursor for DNA biosynthesis. This chain is Thymidylate synthase, found in Thioalkalivibrio sulfidiphilus (strain HL-EbGR7).